Consider the following 380-residue polypeptide: DNA replication and repair protein RecF (380 aa).

30–37 (GPNGFGKT) contributes to the ATP binding site.

The protein belongs to the RecF family.

The protein localises to the cytoplasm. In terms of biological role, the RecF protein is involved in DNA metabolism; it is required for DNA replication and normal SOS inducibility. RecF binds preferentially to single-stranded, linear DNA. It also seems to bind ATP. The chain is DNA replication and repair protein RecF from Mycobacterium sp. (strain JLS).